The following is a 165-amino-acid chain: Large ribosomal subunit protein uL11 (165 aa).

The protein belongs to the universal ribosomal protein uL11 family.

Binds directly to 26S ribosomal RNA. In Caenorhabditis briggsae, this protein is Large ribosomal subunit protein uL11 (rpl-12).